A 218-amino-acid chain; its full sequence is Histidine biosynthesis bifunctional protein HisIE (218 aa).

The interval 1 to 131 (MAPHQFKSKG…GDYDLPPADT (131 aa)) is phosphoribosyl-AMP cyclohydrolase. Positions 132 to 218 (LSQVFRVVEE…VYRALQQRRR (87 aa)) are phosphoribosyl-ATP pyrophosphohydrolase.

This sequence in the N-terminal section; belongs to the PRA-CH family. In the C-terminal section; belongs to the PRA-PH family.

Its subcellular location is the cytoplasm. The enzyme catalyses 1-(5-phospho-beta-D-ribosyl)-ATP + H2O = 1-(5-phospho-beta-D-ribosyl)-5'-AMP + diphosphate + H(+). It catalyses the reaction 1-(5-phospho-beta-D-ribosyl)-5'-AMP + H2O = 1-(5-phospho-beta-D-ribosyl)-5-[(5-phospho-beta-D-ribosylamino)methylideneamino]imidazole-4-carboxamide. Its pathway is amino-acid biosynthesis; L-histidine biosynthesis; L-histidine from 5-phospho-alpha-D-ribose 1-diphosphate: step 2/9. It participates in amino-acid biosynthesis; L-histidine biosynthesis; L-histidine from 5-phospho-alpha-D-ribose 1-diphosphate: step 3/9. The sequence is that of Histidine biosynthesis bifunctional protein HisIE from Gloeobacter violaceus (strain ATCC 29082 / PCC 7421).